The following is a 735-amino-acid chain: MGRGGIGGAGLVAAVAKADVENTDSTRGFVKDVKRIIIKVGTAVVTGPNGRLAMGRLGALCEQVKQLNFEGYEVILVTSGAVGVGRQRLKYRKLVNSSFADLQNPQMDMDGKACAAVGQSVLMAIYDTLFSQLDVTSSQLLVTDRDFMDPSFGNQLRETVNSLLDLKVIPVFNENDAISTRRQPYEDSSGIFWDNDSLARLLAQELKADLLIMLSDVEGLYSGPPSDPQSKIIHTYVHEQHGKLISFGEKSRVGRGGMQAKVAAAFTASSKGIPVVIASGFAIDSIIKVMRGEKIGTLFHREANQWGCSKEATAREMAVAARDCSRHLQKLSSEERKKILLDIADALEANEDLITSENQADLDLAQDIGYDKSLVARMTIKPGKIKSLAGSIREIADMEDPISHTLKRTEVAKDLVFEKTYCPLGVLLIIFESRPDALVQIASLAIRSGNGLLLKGGKEAMRSNTILHKVITGAIPDVVGKKLIGLVKNKDEIADLLKLDDVIDLVIPRGSNKLVSQIKAATKIPVLGHADGICHVYIDKSADMDMAKRIVLDAKVDYPAACNAMETLLVHKDLNRTEGLDDLLVELEKEGVVIYGGPVAHDTLKLPKVDSFHHEYNSMACTLEFVDDVQSAIDHINRYGSAHTDCIITTDGKAAETFLQQVDSAAVFHNASTRFCDGARFGLGAEVGISTGRIHARGPVGVDGLLTTRCILRGSGQVVNGDKGVVYTHRELPLQ.

Positions 1 to 315 (MGRGGIGGAG…WGCSKEATAR (315 aa)) are glutamate 5-kinase. 3 residues coordinate substrate: S79, D176, and N195. ATP-binding positions include 215–216 (SD), 221–226 (YSGPPS), and 255–261 (RGGMQAK). The interval 316–735 (EMAVAARDCS…VYTHRELPLQ (420 aa)) is gamma-glutamyl phosphate reductase.

The protein in the N-terminal section; belongs to the glutamate 5-kinase family. In the C-terminal section; belongs to the gamma-glutamyl phosphate reductase family.

It carries out the reaction L-glutamate + ATP = L-glutamyl 5-phosphate + ADP. The enzyme catalyses L-glutamate 5-semialdehyde + phosphate + NADP(+) = L-glutamyl 5-phosphate + NADPH + H(+). It functions in the pathway amino-acid biosynthesis; L-proline biosynthesis; L-glutamate 5-semialdehyde from L-glutamate: step 1/2. Its pathway is amino-acid biosynthesis; L-proline biosynthesis; L-glutamate 5-semialdehyde from L-glutamate: step 2/2. With respect to regulation, feedback regulated by proline. In terms of biological role, P5CS plays a key role in proline biosynthesis, leading to osmoregulation in plants. Involved in abiotic stress tolerance. The polypeptide is Delta-1-pyrroline-5-carboxylate synthase 2 (Oryza sativa subsp. japonica (Rice)).